The chain runs to 317 residues: Melanocyte-stimulating hormone receptor (317 aa).

Residues 1 to 23 form a disordered region; it reads MSGQGPQRRLLGSPNATSPTTPH. Over 1–37 the chain is Extracellular; the sequence is MSGQGPQRRLLGSPNATSPTTPHFKLAANQTGPRCLE. Asparagine 29 carries N-linked (GlcNAc...) asparagine glycosylation. The chain crosses the membrane as a helical span at residues 38–63; sequence VSIPNGLFLSLGLVSVVENVLVVAAI. The Cytoplasmic portion of the chain corresponds to 64-72; that stretch reads AKNRNLHSP. The chain crosses the membrane as a helical span at residues 73-93; sequence MYYFIGCLAVSDLLVSVTNVL. Over 94–118 the chain is Extracellular; it reads ETAVMLLVEAGALAAQAAVVQQLDD. Residues 119 to 140 form a helical membrane-spanning segment; it reads IIDVLICGSMVSSLCFLGAIAV. The Cytoplasmic segment spans residues 141–163; the sequence is DRYLSIFYALRYHSIVTLPRAWR. The chain crosses the membrane as a helical span at residues 164 to 183; the sequence is AISAIWVASVLSSTLFIAYY. Topologically, residues 184 to 191 are extracellular; the sequence is NHTAVLLC. Residues 192–211 form a helical membrane-spanning segment; the sequence is LVSFFVAMLVLMAVLYVHML. The Cytoplasmic portion of the chain corresponds to 212 to 240; the sequence is ARARQHARGIARLRKRQHSVHQGFGLKGA. A helical transmembrane segment spans residues 241-266; sequence ATLTILLGIFFLCWGPFFLHLSLMVL. The Extracellular portion of the chain corresponds to 267–279; the sequence is CPQHPICGCVFQN. A helical transmembrane segment spans residues 280-300; the sequence is FNLFLTLIICNSIIDPFIYAF. The Cytoplasmic segment spans residues 301–317; sequence RSQELRKTLQEVVLCSW. The S-palmitoyl cysteine moiety is linked to residue cysteine 315.

Belongs to the G-protein coupled receptor 1 family. Interacts with MGRN1, but does not undergo MGRN1-mediated ubiquitination; this interaction competes with GNAS-binding and thus inhibits agonist-induced cAMP production. Interacts with OPN3; the interaction results in a decrease in MC1R-mediated cAMP signaling and ultimately a decrease in melanin production in melanocytes.

It localises to the cell membrane. Its function is as follows. Receptor for MSH (alpha, beta and gamma) and ACTH. The activity of this receptor is mediated by G proteins which activate adenylate cyclase. Mediates melanogenesis, the production of eumelanin (black/brown) and phaeomelanin (red/yellow), via regulation of cAMP signaling in melanocytes. The sequence is that of Melanocyte-stimulating hormone receptor (MC1R) from Vulpes vulpes (Red fox).